The primary structure comprises 550 residues: MEGSHSSNMERLEYLYLNLVGQVVQVRLVDDMCVEGLFVACTDVDAETDAGIMICCTRNLASAKRSPLSPSCVNFTDDLFIPYQSIVMIEVQNAKIRTETPGRPDTGRADFSATKFDWADDGVSELLESEPHQTGTWNQFEANEKSFGVKTTYKEEFYTTRLDHSKITEEQRAQADRLAREIESSSTRGIAHRMEREECLHDDEGLDEGQLYSDVHRPQEKKPPYVPPSTGGRKLVNEPPPVPAAAAPATAPTTAPAAAPAPAAAPPAAAPAAAAPPPPPAATSMADDGSMRHKRMNEDPHHMQYDANQTAAGFNPAAAPYTPMKPGAAVPVVDFLASLADAISNNDMCYDCEPHWPGMCNLFYDQDDSSYSQQNYEAAAMPPSHSMNMHMYVNSQPNIPNAHRGYQGPLGRVPHNQSMPMHHMQGQGFHHEMHHHQAFHGMGNYSSQHHNPPIQEYAPHKGQQGVVSRPGMRQGKGGGASRVEPQQPVSANTASSPPPVPTVDSAPNEVKPPAKLQRGRGMAAFTKGDMDGDSGATTNATGGPKKRVGK.

Positions 11 to 95 constitute a Sm domain; that stretch reads RLEYLYLNLV…IVMIEVQNAK (85 aa). Disordered regions lie at residues 201–296 and 441–550; these read HDDE…HKRM and GMGN…RVGK. Residues 214 to 223 are compositionally biased toward basic and acidic residues; sequence DVHRPQEKKP. Positions 244–262 are enriched in low complexity; that stretch reads AAAAPATAPTTAPAAAPAP. The segment covering 263-281 has biased composition (pro residues); the sequence is AAAPPAAAPAAAAPPPPPA.

It belongs to the ataxin-2 family. Forms a complex composed of at least MKT1, PBP1, XAC1 and LSM12. Forms a complex composed of at least MKT1L, PBP1, XAC1 and LSM12. Within the complex, interacts with MKT1 (via C-terminus); the interaction is direct. Interacts (via C-terminus) with ZC3H11; the interaction is direct.

It localises to the cytoplasm. The protein localises to the cytosol. The protein resides in the stress granule. Involved in post-transcriptional regulation of gene expression. Promotes mRNA stabilization by bridging poly(A)-binding protein to mRNAs. The chain is PAB1-binding protein 1 from Trypanosoma brucei brucei (strain 927/4 GUTat10.1).